A 394-amino-acid polypeptide reads, in one-letter code: Anhydro-N-acetylmuramic acid kinase (394 aa).

ATP is bound at residue 11–18 (GTSADGID).

The protein belongs to the anhydro-N-acetylmuramic acid kinase family.

It carries out the reaction 1,6-anhydro-N-acetyl-beta-muramate + ATP + H2O = N-acetyl-D-muramate 6-phosphate + ADP + H(+). The protein operates within amino-sugar metabolism; 1,6-anhydro-N-acetylmuramate degradation. It functions in the pathway cell wall biogenesis; peptidoglycan recycling. Functionally, catalyzes the specific phosphorylation of 1,6-anhydro-N-acetylmuramic acid (anhMurNAc) with the simultaneous cleavage of the 1,6-anhydro ring, generating MurNAc-6-P. Is required for the utilization of anhMurNAc either imported from the medium or derived from its own cell wall murein, and thus plays a role in cell wall recycling. This is Anhydro-N-acetylmuramic acid kinase from Deinococcus geothermalis (strain DSM 11300 / CIP 105573 / AG-3a).